Consider the following 330-residue polypeptide: (4-{4-[2-(gamma-L-glutamylamino)ethyl]phenoxymethyl}furan-2-yl)methanamine synthase (330 aa).

This sequence belongs to the MfnF family.

The enzyme catalyses gamma-L-glutamyltyramine + [5-(aminomethyl)furan-3-yl]methyl diphosphate = (4-{4-[2-(gamma-L-glutamylamino)ethyl]phenoxymethyl}furan-2-yl)methanamine + diphosphate. It participates in cofactor biosynthesis; methanofuran biosynthesis. Catalyzes the condensation between 5-(aminomethyl)-3-furanmethanol diphosphate (F1-PP) and gamma-glutamyltyramine to produce APMF-Glu. The sequence is that of (4-{4-[2-(gamma-L-glutamylamino)ethyl]phenoxymethyl}furan-2-yl)methanamine synthase from Methanocaldococcus jannaschii (strain ATCC 43067 / DSM 2661 / JAL-1 / JCM 10045 / NBRC 100440) (Methanococcus jannaschii).